A 282-amino-acid polypeptide reads, in one-letter code: Pyridoxal 5'-phosphate synthase subunit PdxS (282 aa).

Position 14 (aspartate 14) interacts with D-ribose 5-phosphate. The Schiff-base intermediate with D-ribose 5-phosphate role is filled by lysine 71. Glycine 143 contacts D-ribose 5-phosphate. Arginine 155 lines the D-glyceraldehyde 3-phosphate pocket. Residues glycine 204 and 225–226 (GS) contribute to the D-ribose 5-phosphate site.

It belongs to the PdxS/SNZ family. As to quaternary structure, in the presence of PdxT, forms a dodecamer of heterodimers.

The catalysed reaction is aldehydo-D-ribose 5-phosphate + D-glyceraldehyde 3-phosphate + L-glutamine = pyridoxal 5'-phosphate + L-glutamate + phosphate + 3 H2O + H(+). The protein operates within cofactor biosynthesis; pyridoxal 5'-phosphate biosynthesis. Catalyzes the formation of pyridoxal 5'-phosphate from ribose 5-phosphate (RBP), glyceraldehyde 3-phosphate (G3P) and ammonia. The ammonia is provided by the PdxT subunit. Can also use ribulose 5-phosphate and dihydroxyacetone phosphate as substrates, resulting from enzyme-catalyzed isomerization of RBP and G3P, respectively. This Treponema denticola (strain ATCC 35405 / DSM 14222 / CIP 103919 / JCM 8153 / KCTC 15104) protein is Pyridoxal 5'-phosphate synthase subunit PdxS.